The sequence spans 62 residues: uncharacterized protein (62 aa).

A helical transmembrane segment spans residues 17–37; that stretch reads IVFFLGLVVVLLMMINLYMLI.

It is found in the membrane. This is an uncharacterized protein from Helicobacter pylori (strain J99 / ATCC 700824) (Campylobacter pylori J99).